The following is a 132-amino-acid chain: Small ribosomal subunit protein uS8 (132 aa).

This sequence belongs to the universal ribosomal protein uS8 family. Part of the 30S ribosomal subunit. Contacts proteins S5 and S12.

One of the primary rRNA binding proteins, it binds directly to 16S rRNA central domain where it helps coordinate assembly of the platform of the 30S subunit. The polypeptide is Small ribosomal subunit protein uS8 (Leuconostoc citreum (strain KM20)).